A 39-amino-acid chain; its full sequence is Photosystem II reaction center protein Y (39 aa).

The chain crosses the membrane as a helical span at residues 7–25 (VLVVLLPVLLAGGWALKNI).

The protein belongs to the PsbY family. PSII is composed of 1 copy each of membrane proteins PsbA, PsbB, PsbC, PsbD, PsbE, PsbF, PsbH, PsbI, PsbJ, PsbK, PsbL, PsbM, PsbT, PsbX, PsbY, PsbZ, Psb30/Ycf12, peripheral proteins PsbO, CyanoQ (PsbQ), PsbU, PsbV and a large number of cofactors. It forms dimeric complexes.

Its subcellular location is the cellular thylakoid membrane. Its function is as follows. Loosely associated component of the core of photosystem II (PSII), it is not always seen in crystals. PSII is a light-driven water plastoquinone oxidoreductase, using light energy to abstract electrons from H(2)O, generating a proton gradient subsequently used for ATP formation. The sequence is that of Photosystem II reaction center protein Y from Cyanothece sp. (strain PCC 7425 / ATCC 29141).